The following is a 510-amino-acid chain: Maturase K (510 aa).

It belongs to the intron maturase 2 family. MatK subfamily.

It is found in the plastid. Its subcellular location is the chloroplast. Usually encoded in the trnK tRNA gene intron. Probably assists in splicing its own and other chloroplast group II introns. In Anomochloa marantoidea (Herbaceous bamboo), this protein is Maturase K.